We begin with the raw amino-acid sequence, 536 residues long: Velvet complex subunit B (536 aa).

The span at 1-26 (MIQRTTDPAAGSSTSGPPTNSLSWGS) shows a compositional bias: polar residues. 4 disordered regions span residues 1 to 27 (MIQRTTDPAAGSSTSGPPTNSLSWGSR), 106 to 143 (PNAAQDRGPPMPAKPRRPTNPPPPSNTHGSPPAPAIPF), 157 to 409 (SAPA…RTLV), and 508 to 536 (KLPLRNRHGSGSKRRRRGAGGGSDDEESD). Residues 25–512 (GSRHNGKLYT…NQQNMKLPLR (488 aa)) form the Velvet domain. Positions 114-143 (PPMPAKPRRPTNPPPPSNTHGSPPAPAIPF) are enriched in pro residues. Composition is skewed to low complexity over residues 158 to 170 (APASDRSPSSASA) and 190 to 265 (PYGP…YPPY). Residues 280–305 (TSNFDHSQPVTSSVDQETNSPVVTTT) show a composition bias toward polar residues. Basic and acidic residues predominate over residues 306–315 (ARDDDQREGE). The segment covering 328–342 (PSNSGAPSTSPTAST) has biased composition (low complexity). Positions 356–399 (EEREGPDGGPDLREPIEPGSTKAREEEDARTGTEKGDPKDKSDA) are enriched in basic and acidic residues. Polar residues predominate over residues 400–409 (QRATYTRTLV). Residues 511–525 (LRNRHGSGSKRRRRG) show a composition bias toward basic residues.

Belongs to the velvet family. VelB subfamily. Component of the heterotrimeric velvet complex composed of laeA, veA and velB; VeA acting as a bridging protein between laeA and velB. Forms a heterodimeric complex with vosA; the formation of the velB-vosA complex is light-dependent.

Its subcellular location is the nucleus. It is found in the cytoplasm. Its function is as follows. Component of the velvet transcription factor complex that controls sexual/asexual developmental ratio in response to light, promoting sexual development in the darkness while stimulating asexual sporulation under illumination. The velvet complex acts as a global regulator for secondary metabolite gene expression. Component of the velB-VosA heterodimeric complex that plays a dual role in activating genes associated with spore maturation and repressing certain development-associated genes. The velB-VosA complex binds DNA through the DNA-binding domain of vosA that recognizes an 11-nucleotide consensus sequence 5'-CTGGCCGCGGC-3' consisting of two motifs in the promoters of key developmental regulatory genes. The chain is Velvet complex subunit B from Schizophyllum commune (strain H4-8 / FGSC 9210) (Split gill fungus).